We begin with the raw amino-acid sequence, 239 residues long: Uridylate kinase (239 aa).

10–13 (KISG) lines the ATP pocket. The tract at residues 18-23 (GEAGFG) is involved in allosteric activation by GTP. Gly52 provides a ligand contact to UMP. Gly53 and Arg57 together coordinate ATP. UMP is bound by residues Asp72 and 133-140 (TGNPYFST). ATP contacts are provided by Asn161, Tyr167, and Asp170.

This sequence belongs to the UMP kinase family. As to quaternary structure, homohexamer.

The protein localises to the cytoplasm. The enzyme catalyses UMP + ATP = UDP + ADP. It functions in the pathway pyrimidine metabolism; CTP biosynthesis via de novo pathway; UDP from UMP (UMPK route): step 1/1. With respect to regulation, allosterically activated by GTP. Inhibited by UTP. In terms of biological role, catalyzes the reversible phosphorylation of UMP to UDP. This Lacticaseibacillus paracasei (strain ATCC 334 / BCRC 17002 / CCUG 31169 / CIP 107868 / KCTC 3260 / NRRL B-441) (Lactobacillus paracasei) protein is Uridylate kinase.